The chain runs to 165 residues: Urease accessory protein UreE (165 aa).

Residues 137 to 156 are disordered; it reads EAGAYQSAPHGHSHAHGHDH.

It belongs to the UreE family.

The protein localises to the cytoplasm. Involved in urease metallocenter assembly. Binds nickel. Probably functions as a nickel donor during metallocenter assembly. This chain is Urease accessory protein UreE, found in Pseudomonas putida (strain GB-1).